We begin with the raw amino-acid sequence, 248 residues long: Gas vesicle protein J (248 aa).

One copy of the 1; truncated repeat lies at 121–140 (DVKDDLYQTSAKIPSPVDTP). Positions 121–245 (DVKDDLYQTS…EEIPSSVDPA (125 aa)) are 6 X 21 AA approximate tandem repeats. Repeat copies occupy residues 141–161 (IEVLDFQAQSSGGTPPYVNTS), 162–182 (MEILDFQAQTSAESSSPVGST), 183–203 (VEILDFQAQTSEESSSPVVST), 204–224 (VEILDFQAQTSEESSSPVGST), and 225–245 (VEILDFQAQTSEEIPSSVDPA).

The protein belongs to the gas vesicle GvpA family. Interacts with GvpA.

The protein resides in the gas vesicle. In terms of biological role, a minor component of the gas vesicle, might be involved in nucleating gas vesicle formation. Gas vesicles (GV) are hollow, gas filled proteinaceous nanostructures. During planktonic growth they allow positioning of the organism at a favorable depth for light or nutrient acquisition. The sequence is that of Gas vesicle protein J from Dolichospermum flosaquae (Anabaena flos-aquae).